The chain runs to 260 residues: Fibronectin type III domain-containing protein 5 (260 aa).

A disordered region spans residues 1 to 56 (MQAARGGAGRPERPGRPGRGPERERERPPGAGAASPCAAPGLPAGGATIHPGSPSA). The span at 10 to 28 (RPERPGRPGRGPERERERP) shows a compositional bias: basic and acidic residues. Over residues 29–56 (PGAGAASPCAAPGLPAGGATIHPGSPSA) the composition is skewed to low complexity. In terms of domain architecture, Fibronectin type-III spans 84–175 (APVNVTVRHL…EPVLFKTPRE (92 aa)). Residues N87 and N132 are each glycosylated (N-linked (GlcNAc...) asparagine). The helical transmembrane segment at 201 to 221 (GEVLIIVVVLFMWAGVIALFC) threads the bilayer. The span at 230–241 (NEPNNNKEKTKS) shows a compositional bias: basic and acidic residues. The tract at residues 230 to 260 (NEPNNNKEKTKSASETSTPEHQGGGLLRSKI) is disordered. Over residues 251–260 (QGGGLLRSKI) the composition is skewed to gly residues. The short motif at 258–260 (SKI) is the Microbody targeting signal element.

In terms of assembly, dimer; may exist in other oligomeric forms. In terms of processing, the extracellular domain is cleaved and released from the cell membrane. Post-translationally, N-Glycosylated. As to expression, widely expressed, with highest levels in heart. Very low expression, if any, in colon, pancreas and spleen.

Its subcellular location is the cell membrane. The protein localises to the peroxisome membrane. It is found in the secreted. Mediates beneficial effects of muscular exercise. Induces browning of white adipose tissue by stimulating UCP1 expression, at least in part, via the nuclear receptor PPARA. The protein is Fibronectin type III domain-containing protein 5 (FNDC5) of Homo sapiens (Human).